The chain runs to 110 residues: UPF0060 membrane protein RSp1275 (110 aa).

Transmembrane regions (helical) follow at residues 8-28 (FLFA…WLVL), 33-53 (SAWL…LLTL), 63-83 (AAYG…VDGA), and 90-110 (IGGA…PQPT).

Belongs to the UPF0060 family.

The protein localises to the cell inner membrane. The polypeptide is UPF0060 membrane protein RSp1275 (Ralstonia nicotianae (strain ATCC BAA-1114 / GMI1000) (Ralstonia solanacearum)).